A 577-amino-acid chain; its full sequence is Phosphoethanolamine transferase CptA (577 aa).

A run of 5 helical transmembrane segments spans residues 17–37 (LGWALLYFWFFSTLLQAIIYL), 45–65 (GLRDSLLYSSLWLIPVFLFPG), 69–89 (VIAAVIGVVLWAASLAALSYY), 119–139 (YFSLKIVLVALAYTVAAILLW), and 154–174 (LVSFALLYGLILHPIAMNTFI).

The protein belongs to the phosphoethanolamine transferase family. EptC/CptA subfamily.

Its subcellular location is the cell inner membrane. The protein operates within bacterial outer membrane biogenesis; LPS core biosynthesis. In terms of biological role, catalyzes the addition of a phosphoethanolamine moiety to the outer membrane lipopolysaccharide core. The protein is Phosphoethanolamine transferase CptA (cptA) of Salmonella typhimurium (strain LT2 / SGSC1412 / ATCC 700720).